The chain runs to 520 residues: Chaperone Ric-8B (520 aa).

A Phosphoserine modification is found at serine 468. Residue threonine 473 is modified to Phosphothreonine.

It belongs to the synembryn family. Interacts with GDP-bound G(s) G-alpha proteins GNAL and GNAS. Does not interact with G-alpha proteins when they are in complex with subunits beta and gamma. Predominantly expressed in the mature olfactory sensory neurons and also in a few regions in the brain.

Its subcellular location is the cytoplasm. The protein localises to the cell cortex. Chaperone that specifically binds and folds nascent G(s) G-alpha proteins (GNAS and GNAL) prior to G protein heterotrimer formation, promoting their association with the plasma membrane. Also acts as a guanine nucleotide exchange factor (GEF) for G(s) proteins by stimulating exchange of bound GDP for free GTP. Acts as an important component for odorant signal transduction by mediating GNAL (G(olf)-alpha) folding, thereby promoting-dependent cAMP accumulation in olfactory sensory neurons. In Mus musculus (Mouse), this protein is Chaperone Ric-8B.